The chain runs to 282 residues: Pantothenate synthetase (282 aa).

31–38 (MGYLHEGH) lines the ATP pocket. Histidine 38 acts as the Proton donor in catalysis. Residue glutamine 62 coordinates (R)-pantoate. Glutamine 62 serves as a coordination point for beta-alanine. 148-151 (GEKD) contributes to the ATP binding site. Glutamine 154 is a (R)-pantoate binding site. ATP contacts are provided by residues valine 177 and 185 to 188 (YSSR).

It belongs to the pantothenate synthetase family. As to quaternary structure, homodimer.

It localises to the cytoplasm. It catalyses the reaction (R)-pantoate + beta-alanine + ATP = (R)-pantothenate + AMP + diphosphate + H(+). It functions in the pathway cofactor biosynthesis; (R)-pantothenate biosynthesis; (R)-pantothenate from (R)-pantoate and beta-alanine: step 1/1. Functionally, catalyzes the condensation of pantoate with beta-alanine in an ATP-dependent reaction via a pantoyl-adenylate intermediate. This chain is Pantothenate synthetase, found in Aquifex aeolicus (strain VF5).